We begin with the raw amino-acid sequence, 292 residues long: Insulin-like growth factor-binding protein 3 (292 aa).

The signal sequence occupies residues 1–27 (MHPARPALWAAALTALTLLRGPPVARA). In terms of domain architecture, IGFBP N-terminal spans 36-119 (PVVRCEPCDA…LNGRGFCANA (84 aa)). Disulfide bonds link Cys40-Cys69, Cys43-Cys71, Cys51-Cys72, Cys60-Cys75, Cys83-Cys96, and Cys90-Cys116. Asn118 and Asn137 each carry an N-linked (GlcNAc...) asparagine glycan. Disordered stretches follow at residues 128 to 152 (YLPSQPAPGNISESEEEHNAGSVES) and 178 to 212 (KGHARDSQRYKVDYESQSTDTQNFSSESKRETEYG). At Ser149 the chain carries Phosphoserine. Residues 178–191 (KGHARDSQRYKVDY) show a composition bias toward basic and acidic residues. A compositionally biased stretch (polar residues) spans 192 to 203 (ESQSTDTQNFSS). The N-linked (GlcNAc...) asparagine glycan is linked to Asn200. A Phosphoserine modification is found at Ser202. The Thyroglobulin type-1 domain occupies 211–286 (YGPCRREMED…DTKGKDDVHC (76 aa)). Intrachain disulfides connect Cys214/Cys241, Cys252/Cys263, and Cys265/Cys286.

In terms of assembly, interacts with XLKD1. Binds IGF2 more than IGF1. Forms a ternary complex of about 140 to 150 kDa with IGF1 or IGF2 and a 85 kDa glycoprotein (ALS). Interacts with TMEM219. In terms of processing, phosphorylated by FAM20C in the extracellular medium.

It is found in the secreted. In terms of biological role, IGF-binding proteins prolong the half-life of the IGFs and have been shown to either inhibit or stimulate the growth promoting effects of the IGFs on cell culture. They alter the interaction of IGFs with their cell surface receptors. Also exhibits IGF-independent antiproliferative and apoptotic effects mediated by its receptor TMEM219/IGFBP-3R. Promotes testicular germ cell apoptosis. This chain is Insulin-like growth factor-binding protein 3 (Igfbp3), found in Mus musculus (Mouse).